The following is a 90-amino-acid chain: Caspase recruitment domain-containing protein 18 (90 aa).

Positions 1-90 (MADQLLRKKR…PQLASKMGLH (90 aa)) constitute a CARD domain.

Interacts with pro-CASP1. Interacts with CARD8. In terms of tissue distribution, primarily expressed in the heart and placenta.

Functionally, inhibits generation of IL-1-beta by interacting with caspase-1 and preventing its association with RIP2. Down-regulates the release of IL1B. The polypeptide is Caspase recruitment domain-containing protein 18 (CARD18) (Homo sapiens (Human)).